The chain runs to 219 residues: Endonuclease III (219 aa).

One can recognise a HhH domain in the interval 117–136; the sequence is MEELLTLPGVARKTANVVLA. 4 residues coordinate [4Fe-4S] cluster: Cys-197, Cys-204, Cys-207, and Cys-213.

The protein belongs to the Nth/MutY family. It depends on [4Fe-4S] cluster as a cofactor.

The catalysed reaction is 2'-deoxyribonucleotide-(2'-deoxyribose 5'-phosphate)-2'-deoxyribonucleotide-DNA = a 3'-end 2'-deoxyribonucleotide-(2,3-dehydro-2,3-deoxyribose 5'-phosphate)-DNA + a 5'-end 5'-phospho-2'-deoxyribonucleoside-DNA + H(+). DNA repair enzyme that has both DNA N-glycosylase activity and AP-lyase activity. The DNA N-glycosylase activity releases various damaged pyrimidines from DNA by cleaving the N-glycosidic bond, leaving an AP (apurinic/apyrimidinic) site. The AP-lyase activity cleaves the phosphodiester bond 3' to the AP site by a beta-elimination, leaving a 3'-terminal unsaturated sugar and a product with a terminal 5'-phosphate. The polypeptide is Endonuclease III (Synechocystis sp. (strain ATCC 27184 / PCC 6803 / Kazusa)).